We begin with the raw amino-acid sequence, 477 residues long: PTS system glucose-specific EIICB component (477 aa).

A PTS EIIC type-1 domain is found at 1–388 (MFKNVFSSLQ…FNLKTPGREE (388 aa)). Transmembrane regions (helical) follow at residues 20–40 (VSVL…FTLI), 51–71 (TGGS…ALGF), 76–96 (GVAA…LSAV), 112–132 (NFSD…AYMF), 152–172 (FVPI…SLIW), 250–270 (LSGG…AIWH), 280–300 (IGSI…TEPI), 304–324 (FILV…LSFP), and 354–374 (IFLF…IFYF). A PTS EIIB type-1 domain is found at 399 to 477 (IEIAPYIVEA…TAIDEYINNI (79 aa)). Cysteine 421 functions as the Phosphocysteine intermediate; for EIIB activity in the catalytic mechanism. A Phosphocysteine modification is found at cysteine 421.

It localises to the cell inner membrane. The catalysed reaction is N(pros)-phospho-L-histidyl-[protein] + D-glucose(out) = D-glucose 6-phosphate(in) + L-histidyl-[protein]. Functionally, the phosphoenolpyruvate-dependent sugar phosphotransferase system (sugar PTS), a major carbohydrate active transport system, catalyzes the phosphorylation of incoming sugar substrates concomitantly with their translocation across the cell membrane. The enzyme II complex composed of PtsG and Crr is involved in glucose transport. The chain is PTS system glucose-specific EIICB component (ptsG) from Buchnera aphidicola subsp. Schizaphis graminum (strain Sg).